The sequence spans 239 residues: Leucine rich adaptor protein 1 (239 aa).

LRR repeat units follow at residues Leu55–Leu83 and Leu93–Leu114. Residues Leu107 to Gly116 show a composition bias toward low complexity. Disordered stretches follow at residues Leu107–Leu139 and Lys200–Ala219. A phosphoserine mark is found at Ser118, Ser126, Ser129, and Ser213.

Forms a tripartite complex with CDC42BPA/CDC42BPB and MYO18A acting as an adapter connecting both. Its binding to CDC42BPA/CDC42BPB results in their activation by abolition of their negative autoregulation. Interacts with CDC42BPA and CDC42BPB.

Its subcellular location is the cytoplasm. Functionally, acts as an activator of the canonical NF-kappa-B pathway and drive the production of pro-inflammatory cytokines. Promotes the antigen (Ag)-presenting and priming function of dendritic cells via the canonical NF-kappa-B pathway. In concert with MYO18A and CDC42BPA/CDC42BPB, is involved in modulating lamellar actomyosin retrograde flow that is crucial to cell protrusion and migration. Activates CDC42BPA/CDC42BPB and targets it to actomyosin through its interaction with MYO18A, leading to MYL9/MLC2 phosphorylation and MYH9/MYH10-dependent actomyosin assembly in the lamella. The polypeptide is Leucine rich adaptor protein 1 (LURAP1) (Homo sapiens (Human)).